The chain runs to 213 residues: MTSLAELRKNYSLGSLDVGDVDRNPFRQFDTWFKQAVDAQLPEPNTMTLATVDPRGRPSARIVLIKGVDERGFVFFTNYESRKGRELAANPYASLLFYWIELERQVRVEGRIVKTSAEESDGYFASRPLGSRIGAWASNQSQVIESRSQLETREREFSLLYGDQPPRPPHWGGYRLVPEAIEFWQGRPSRLHDRLLYTRSDEHSDWQISRLSP.

Residues 8-11 and Lys66 each bind substrate; that span reads RKNY. FMN-binding positions include 61-66, 76-77, Arg82, Lys83, and Gln105; these read RIVLIK and FT. Substrate-binding residues include Tyr123, Arg127, and Ser131. FMN-binding positions include 140–141 and Trp184; that span reads QS. Position 190-192 (190-192) interacts with substrate; it reads RLH. Arg194 is an FMN binding site.

Belongs to the pyridoxamine 5'-phosphate oxidase family. As to quaternary structure, homodimer. FMN is required as a cofactor.

It catalyses the reaction pyridoxamine 5'-phosphate + O2 + H2O = pyridoxal 5'-phosphate + H2O2 + NH4(+). The catalysed reaction is pyridoxine 5'-phosphate + O2 = pyridoxal 5'-phosphate + H2O2. It functions in the pathway cofactor metabolism; pyridoxal 5'-phosphate salvage; pyridoxal 5'-phosphate from pyridoxamine 5'-phosphate: step 1/1. It participates in cofactor metabolism; pyridoxal 5'-phosphate salvage; pyridoxal 5'-phosphate from pyridoxine 5'-phosphate: step 1/1. Catalyzes the oxidation of either pyridoxine 5'-phosphate (PNP) or pyridoxamine 5'-phosphate (PMP) into pyridoxal 5'-phosphate (PLP). The chain is Pyridoxine/pyridoxamine 5'-phosphate oxidase from Paraburkholderia xenovorans (strain LB400).